Consider the following 958-residue polypeptide: Transcription factor PfmaH (958 aa).

Positions 44–70 form a DNA-binding region, zn(2)-C6 fungal-type; it reads CLNCSQAKTGCNKEVPCQRCQDKGLHC. The interval 272-301 is disordered; that stretch reads EFAGSPSGVSPFGDLSTSNSEPSSSSWGSS. Over residues 287–301 the composition is skewed to low complexity; sequence STSNSEPSSSSWGSS.

It localises to the nucleus. Functionally, transcription factor; part of the gene cluster that mediates the biosynthesis of dihydroxynaphthalene (DHN)-melanin, a bluish-green pigment forming a dark layer in the conidial wall that protects the conidia from UV radiations. The 2 transcription factors present in the cluster, PfmaF and PfmaH, coordinately regulate DHN-melanin production. PfmaH acts as a pathway specific regulator to mediate the expression of Pfma cluster genes including PfmaJ, leading to DHN-melanin production in conidia, and regulates the conidial formation. The sequence is that of Transcription factor PfmaH (PfmaH) from Pestalotiopsis fici (strain W106-1 / CGMCC3.15140).